Consider the following 138-residue polypeptide: MQVSIPVCYPCPSFPQTRPFAGDGRKFGRVDSGFMPKLWEGLSVGAGAAVGACARLALTMQFGEGLWPILAINMLGSFLMGRYRPGPFWGTGVLGGFTTFSAFAVVLVDVPLPHAVAYLTVTVVSCVAAWLMGNRWSA.

4 consecutive transmembrane segments (helical) span residues 34-54 (FMPK…GACA), 60-80 (MQFG…SFLM), 88-108 (FWGT…VVLV), and 112-132 (LPHA…AWLM). Residues Gly95 and Thr98 each coordinate Na(+).

This sequence belongs to the fluoride channel Fluc/FEX (TC 1.A.43) family.

It localises to the cell membrane. The enzyme catalyses fluoride(in) = fluoride(out). Na(+) is not transported, but it plays an essential structural role and its presence is essential for fluoride channel function. Functionally, fluoride-specific ion channel. Important for reducing fluoride concentration in the cell, thus reducing its toxicity. The polypeptide is Fluoride-specific ion channel FluC (Corynebacterium efficiens (strain DSM 44549 / YS-314 / AJ 12310 / JCM 11189 / NBRC 100395)).